A 22-amino-acid chain; its full sequence is QRFIHPTYRPPPQPRRPVIMRA.

Gln-1 is subject to Pyrrolidone carboxylic acid. The tract at residues 1 to 22 (QRFIHPTYRPPPQPRRPVIMRA) is disordered. O-linked (GalNAc...) threonine glycosylation is present at Thr-7.

In terms of assembly, monomer. In terms of tissue distribution, hemolymph.

It localises to the secreted. In terms of biological role, has antibacterial activity, preferentially against Gram-negative bacteria. The protein is Heliocin of Heliothis virescens (Tobacco budworm moth).